Consider the following 294-residue polypeptide: Phosphatidylserine decarboxylase proenzyme (294 aa).

Catalysis depends on charge relay system; for autoendoproteolytic cleavage activity residues Asp92, His149, and Ser252. Catalysis depends on Ser252, which acts as the Schiff-base intermediate with substrate; via pyruvic acid; for decarboxylase activity. Ser252 is subject to Pyruvic acid (Ser); by autocatalysis.

This sequence belongs to the phosphatidylserine decarboxylase family. PSD-B subfamily. Prokaryotic type I sub-subfamily. Heterodimer of a large membrane-associated beta subunit and a small pyruvoyl-containing alpha subunit. Pyruvate serves as cofactor. Is synthesized initially as an inactive proenzyme. Formation of the active enzyme involves a self-maturation process in which the active site pyruvoyl group is generated from an internal serine residue via an autocatalytic post-translational modification. Two non-identical subunits are generated from the proenzyme in this reaction, and the pyruvate is formed at the N-terminus of the alpha chain, which is derived from the carboxyl end of the proenzyme. The autoendoproteolytic cleavage occurs by a canonical serine protease mechanism, in which the side chain hydroxyl group of the serine supplies its oxygen atom to form the C-terminus of the beta chain, while the remainder of the serine residue undergoes an oxidative deamination to produce ammonia and the pyruvoyl prosthetic group on the alpha chain. During this reaction, the Ser that is part of the protease active site of the proenzyme becomes the pyruvoyl prosthetic group, which constitutes an essential element of the active site of the mature decarboxylase.

Its subcellular location is the cell membrane. It carries out the reaction a 1,2-diacyl-sn-glycero-3-phospho-L-serine + H(+) = a 1,2-diacyl-sn-glycero-3-phosphoethanolamine + CO2. It functions in the pathway phospholipid metabolism; phosphatidylethanolamine biosynthesis; phosphatidylethanolamine from CDP-diacylglycerol: step 2/2. Its function is as follows. Catalyzes the formation of phosphatidylethanolamine (PtdEtn) from phosphatidylserine (PtdSer). This Bordetella avium (strain 197N) protein is Phosphatidylserine decarboxylase proenzyme.